The primary structure comprises 163 residues: Shikimate kinase (163 aa).

Position 10-15 (10-15) interacts with ATP; that stretch reads GVGKTT. T14 is a binding site for Mg(2+). Substrate-binding residues include D28, R52, and G75. Residue R116 participates in ATP binding. Residue R134 participates in substrate binding. R151 serves as a coordination point for ATP.

This sequence belongs to the shikimate kinase family. Monomer. Mg(2+) is required as a cofactor.

It is found in the cytoplasm. It catalyses the reaction shikimate + ATP = 3-phosphoshikimate + ADP + H(+). The protein operates within metabolic intermediate biosynthesis; chorismate biosynthesis; chorismate from D-erythrose 4-phosphate and phosphoenolpyruvate: step 5/7. Its function is as follows. Catalyzes the specific phosphorylation of the 3-hydroxyl group of shikimic acid using ATP as a cosubstrate. The sequence is that of Shikimate kinase from Streptococcus pyogenes serotype M49 (strain NZ131).